Reading from the N-terminus, the 226-residue chain is Transmembrane protein 204 (226 aa).

Topologically, residues 1–5 (MTVRK) are cytoplasmic. Residues 6-26 (VVATAVLVALVSLVLNNAAAF) traverse the membrane as a helical segment. The Extracellular segment spans residues 27-103 (TPNWVYQTLE…LQFDMMRACN (77 aa)). Residues 104–124 (LVATAALAAGQLTFVLGLTGL) traverse the membrane as a helical segment. Over 125-136 (PLLSPDAQCWEE) the chain is Cytoplasmic. A helical transmembrane segment spans residues 137-157 (AMAAAFQLASFVLVIGLVTFY). The Extracellular segment spans residues 158–170 (RIGPYTSLSWSCY). Residues 171 to 191 (LNIGACLLATLAAAMLIWNVL) traverse the membrane as a helical segment. The Cytoplasmic segment spans residues 192 to 226 (HRREDCTAPRVIVISRSLTARFRRGLDNDYVESPC).

The protein localises to the cell junction. Its subcellular location is the adherens junction. The protein resides in the cell membrane. In terms of biological role, can influence paracellular permeability. Appears to be involved in cell-cell interactions through adherens. The protein is Transmembrane protein 204 (TMEM204) of Bos taurus (Bovine).